A 459-amino-acid chain; its full sequence is tRNA(Ile2) 2-agmatinylcytidine synthetase TiaS (459 aa).

Positions 282–360 (VRVRVWVASI…TINLEKLHII (79 aa)) form a DNA-binding region, OB.

Belongs to the TiaS family.

It is found in the cytoplasm. The catalysed reaction is cytidine(34) in tRNA(Ile2) + agmatine + ATP + H2O = 2-agmatinylcytidine(34) in tRNA(Ile2) + AMP + 2 phosphate + 2 H(+). In terms of biological role, ATP-dependent agmatine transferase that catalyzes the formation of 2-agmatinylcytidine (agm2C) at the wobble position (C34) of tRNA(Ile2), converting the codon specificity from AUG to AUA. In Staphylothermus marinus (strain ATCC 43588 / DSM 3639 / JCM 9404 / F1), this protein is tRNA(Ile2) 2-agmatinylcytidine synthetase TiaS.